Reading from the N-terminus, the 134-residue chain is Probable glycine cleavage system H protein (134 aa).

The Lipoyl-binding domain maps to 29-110; the sequence is TVLVGITDYA…PYENWIAKLK (82 aa). K70 bears the N6-lipoyllysine mark.

This sequence belongs to the GcvH family. As to quaternary structure, the glycine cleavage system is composed of four proteins: P, T, L and H. The cofactor is (R)-lipoate.

Its function is as follows. The glycine cleavage system catalyzes the degradation of glycine. The H protein shuttles the methylamine group of glycine from the P protein to the T protein. The polypeptide is Probable glycine cleavage system H protein (Thermococcus gammatolerans (strain DSM 15229 / JCM 11827 / EJ3)).